A 1067-amino-acid polypeptide reads, in one-letter code: Zinc finger MIZ domain-containing protein 1 (1067 aa).

A sufficient for transactivation activity; sufficient for interaction with NOTCH1 region spans residues 1–120 (MNSMDRHIQQ…HQKSRQSDPP (120 aa)). A Glycyl lysine isopeptide (Lys-Gly) (interchain with G-Cter in SUMO2) cross-link involves residue Lys-91. Disordered regions lie at residues 112–141 (QKSRQSDPPGKLPMQPPLSSMSSMKPTLSH) and 327–542 (NSQF…PFPP). Residues 128–141 (PLSSMSSMKPTLSH) show a composition bias toward low complexity. Over residues 413 to 429 (YGNQQYGPNSQFPTQPG) the composition is skewed to polar residues. Residues 431-440 (YPAPNPPRPL) are compositionally biased toward pro residues. Low complexity predominate over residues 479–497 (NNTFSGSSYSNYSQGNVNR). Over residues 510 to 521 (SPVPGNPTPPMT) the composition is skewed to pro residues. Residues 727-808 (GEDGVEQTAI…MWGILNAIQH (82 aa)) form an SP-RING-type zinc finger. Zn(2+) contacts are provided by Cys-758, His-760, Cys-781, and Cys-784. Glycyl lysine isopeptide (Lys-Gly) (interchain with G-Cter in SUMO2) cross-links involve residues Lys-834 and Lys-843. The transactivation domain stretch occupies residues 837–1067 (PDGIPSKRFK…DDLLSLFENN (231 aa)). Positions 868–879 (GPSPYPLPPPPG) are enriched in pro residues. A disordered region spans residues 868–1067 (GPSPYPLPPP…DDLLSLFENN (200 aa)). Composition is skewed to polar residues over residues 881 to 895 (TNSNDYSSQGNNYQG) and 951 to 961 (SSDQPHPSIQQ). The span at 981–996 (APPPPPSQPPRQPPQA) shows a compositional bias: pro residues. The span at 1040–1067 (PDELLSYLDPPDLPSNSNDDLLSLFENN) shows a compositional bias: low complexity.

As to quaternary structure, interacts with AR, but not with ESR1, NR3C1, PGR, THRB nor VDR. Interacts with NOTCH1 and RBPJ. Interacts with SMARCA4. Interacts (via SP-RING-type domain) with SMAD3 and SMAD4 (via MH2 domain). Expressed most abundantly in ovary and, at lower levels, in prostate, spleen and testis. Weak expression, if any, in thymus, small intestine, colon and peripheral blood leukocytes.

The protein localises to the nucleus. Its subcellular location is the nucleoplasm. It is found in the cytoplasm. Its function is as follows. Acts as a transcriptional coactivator. Increases ligand-dependent transcriptional activity of AR and promotes AR sumoylation. The stimulation of AR activity is dependent upon sumoylation. Also functions as a transcriptional coactivator in the TGF-beta signaling pathway by increasing the activity of the SMAD3/SMAD4 transcriptional complex. Involved in transcriptional activation of a subset of NOTCH1 target genes including MYC. Involved in thymocyte and T cell development. Involved in the regulation of postmitotic positioning of pyramidal neurons in the developing cerebral cortex. This is Zinc finger MIZ domain-containing protein 1 from Homo sapiens (Human).